The chain runs to 367 residues: 2-oxoisovalerate dehydrogenase subunit alpha (367 aa).

Substrate-binding positions include F66, Y95, 128–131 (MPEH), and S144. 94–96 (YYR) is a binding site for thiamine diphosphate. Thiamine diphosphate contacts are provided by residues 144 to 146 (SPI), 174 to 180 (GDGATSE), 204 to 208 (NFYAI), and H273. Residues D175, N204, and Y206 each contribute to the Mg(2+) site.

Belongs to the BCKDHA family. In terms of assembly, heterotetramer of two alpha and two beta chains. Directly associated with ODBB in the E1 complex. It depends on thiamine diphosphate as a cofactor.

It catalyses the reaction N(6)-[(R)-lipoyl]-L-lysyl-[protein] + 3-methyl-2-oxobutanoate + H(+) = N(6)-[(R)-S(8)-2-methylpropanoyldihydrolipoyl]-L-lysyl-[protein] + CO2. Its function is as follows. The branched-chain alpha-keto dehydrogenase complex catalyzes the overall conversion of alpha-keto acids to acyl-CoA and CO(2). It contains multiple copies of three enzymatic components: branched-chain alpha-keto acid decarboxylase (E1), lipoamide acyltransferase (E2) and lipoamide dehydrogenase (E3). This is 2-oxoisovalerate dehydrogenase subunit alpha from Thermus thermophilus (strain ATCC BAA-163 / DSM 7039 / HB27).